The chain runs to 192 residues: Pyridoxal 5'-phosphate synthase subunit PdxT (192 aa).

Position 47-49 (47-49 (GES)) interacts with L-glutamine. Cysteine 79 serves as the catalytic Nucleophile. L-glutamine contacts are provided by residues arginine 106 and 134–135 (IR). Catalysis depends on charge relay system residues histidine 170 and glutamate 172.

It belongs to the glutaminase PdxT/SNO family. In terms of assembly, in the presence of PdxS, forms a dodecamer of heterodimers. Only shows activity in the heterodimer.

The catalysed reaction is aldehydo-D-ribose 5-phosphate + D-glyceraldehyde 3-phosphate + L-glutamine = pyridoxal 5'-phosphate + L-glutamate + phosphate + 3 H2O + H(+). It carries out the reaction L-glutamine + H2O = L-glutamate + NH4(+). It functions in the pathway cofactor biosynthesis; pyridoxal 5'-phosphate biosynthesis. In terms of biological role, catalyzes the hydrolysis of glutamine to glutamate and ammonia as part of the biosynthesis of pyridoxal 5'-phosphate. The resulting ammonia molecule is channeled to the active site of PdxS. This chain is Pyridoxal 5'-phosphate synthase subunit PdxT, found in Anoxybacillus flavithermus (strain DSM 21510 / WK1).